Consider the following 668-residue polypeptide: CLK4-associating serine/arginine rich protein (668 aa).

A Phosphoserine modification is found at Ser-101. Disordered regions lie at residues 173-232 and 252-668; these read AEVE…GMAD and AKAL…HYRH. The span at 182–214 shows a compositional bias: acidic residues; sequence PEEEESPAEEESNSDEDEVIPDIDVEVDVDELN. A compositionally biased stretch (basic residues) spans 265 to 283; the sequence is RRSRRQRREFREKRLRGRK. Residues Ser-285 and Ser-294 each carry the phosphoserine modification. Basic and acidic residues predominate over residues 290-313; it reads ARRDSPTYDPYKRSPSESSSESRS. Thr-327 is modified (phosphothreonine). Residues Ser-331 and Ser-335 each carry the phosphoserine modification. Low complexity-rich tracts occupy residues 340 to 353 and 378 to 395; these read AAAA…GAAP and SSSS…SRSS. The span at 396–435 shows a compositional bias: basic residues; it reads SRSRRGYYRSGRHARSRSRSWSRSRSRSRRYSRSRSRGRR. Residues 436 to 446 are compositionally biased toward basic and acidic residues; that stretch reads HSDGGSRDGHR. A compositionally biased stretch (basic residues) spans 475–486; that stretch reads RGARGPRHHSSS. 2 stretches are compositionally biased toward low complexity: residues 487–510 and 518–527; these read HSRS…SRSQ and QSHSQSQSHS. Ser-541 bears the Phosphoserine mark. Phosphothreonine is present on Thr-567. A coiled-coil region spans residues 579 to 641; it reads ALNRQFKADK…ERQYSRQSRS (63 aa). Composition is skewed to basic and acidic residues over residues 584–611 and 619–635; these read FKAD…ELRA and KERE…ERQY. Over residues 636-645 the composition is skewed to low complexity; the sequence is SRQSRSPSPR. Over residues 653–668 the composition is skewed to basic residues; that stretch reads SRRRSRSRSRSPHYRH.

This sequence belongs to the splicing factor SR family. Probably interacts with CLK4. In terms of processing, phosphorylated in vitro by CLK4. In terms of tissue distribution, highly expressed in brain. Expressed at intermediate level in lung and liver. In brain, it is expressed in the hippocampus, cerebellum and olfactory bulb.

Its subcellular location is the nucleus. The protein localises to the nucleoplasm. Its function is as follows. Probably functions as an alternative splicing regulator. May regulate the mRNA splicing of genes such as CLK1. May act by regulating members of the CLK kinase family. This is CLK4-associating serine/arginine rich protein (Clasrp) from Mus musculus (Mouse).